Here is a 406-residue protein sequence, read N- to C-terminus: Arginine deiminase (406 aa).

Cys396 functions as the Amidino-cysteine intermediate in the catalytic mechanism.

Belongs to the arginine deiminase family.

The protein localises to the cytoplasm. It carries out the reaction L-arginine + H2O = L-citrulline + NH4(+). Its pathway is amino-acid degradation; L-arginine degradation via ADI pathway; carbamoyl phosphate from L-arginine: step 1/2. This chain is Arginine deiminase, found in Aliivibrio salmonicida (strain LFI1238) (Vibrio salmonicida (strain LFI1238)).